A 345-amino-acid polypeptide reads, in one-letter code: N-acetyl-gamma-glutamyl-phosphate reductase (345 aa).

The active site involves Cys-149.

This sequence belongs to the NAGSA dehydrogenase family. Type 1 subfamily.

The protein localises to the cytoplasm. The catalysed reaction is N-acetyl-L-glutamate 5-semialdehyde + phosphate + NADP(+) = N-acetyl-L-glutamyl 5-phosphate + NADPH + H(+). It functions in the pathway amino-acid biosynthesis; L-arginine biosynthesis; N(2)-acetyl-L-ornithine from L-glutamate: step 3/4. In terms of biological role, catalyzes the NADPH-dependent reduction of N-acetyl-5-glutamyl phosphate to yield N-acetyl-L-glutamate 5-semialdehyde. This is N-acetyl-gamma-glutamyl-phosphate reductase from Halalkalibacterium halodurans (strain ATCC BAA-125 / DSM 18197 / FERM 7344 / JCM 9153 / C-125) (Bacillus halodurans).